The following is a 293-amino-acid chain: ATP synthase gamma chain (293 aa).

This sequence belongs to the ATPase gamma chain family. As to quaternary structure, F-type ATPases have 2 components, CF(1) - the catalytic core - and CF(0) - the membrane proton channel. CF(1) has five subunits: alpha(3), beta(3), gamma(1), delta(1), epsilon(1). CF(0) has three main subunits: a, b and c.

The protein localises to the cell inner membrane. Its function is as follows. Produces ATP from ADP in the presence of a proton gradient across the membrane. The gamma chain is believed to be important in regulating ATPase activity and the flow of protons through the CF(0) complex. In Chlorobium chlorochromatii (strain CaD3), this protein is ATP synthase gamma chain.